A 262-amino-acid polypeptide reads, in one-letter code: Hydroxyethylthiazole kinase (262 aa).

Residue methionine 50 participates in substrate binding. Arginine 125 and threonine 171 together coordinate ATP. Glycine 198 contributes to the substrate binding site.

This sequence belongs to the Thz kinase family. It depends on Mg(2+) as a cofactor.

The catalysed reaction is 5-(2-hydroxyethyl)-4-methylthiazole + ATP = 4-methyl-5-(2-phosphooxyethyl)-thiazole + ADP + H(+). It functions in the pathway cofactor biosynthesis; thiamine diphosphate biosynthesis; 4-methyl-5-(2-phosphoethyl)-thiazole from 5-(2-hydroxyethyl)-4-methylthiazole: step 1/1. Catalyzes the phosphorylation of the hydroxyl group of 4-methyl-5-beta-hydroxyethylthiazole (THZ). This chain is Hydroxyethylthiazole kinase, found in Escherichia coli O6:K15:H31 (strain 536 / UPEC).